The sequence spans 370 residues: 3-dehydroquinate synthase (370 aa).

Residues 108–112 (GVIGD), 132–133 (TT), K145, and K154 contribute to the NAD(+) site. Zn(2+)-binding residues include E187, H249, and H267.

It belongs to the sugar phosphate cyclases superfamily. Dehydroquinate synthase family. The cofactor is Co(2+). Zn(2+) serves as cofactor. It depends on NAD(+) as a cofactor.

It is found in the cytoplasm. The enzyme catalyses 7-phospho-2-dehydro-3-deoxy-D-arabino-heptonate = 3-dehydroquinate + phosphate. It participates in metabolic intermediate biosynthesis; chorismate biosynthesis; chorismate from D-erythrose 4-phosphate and phosphoenolpyruvate: step 2/7. Catalyzes the conversion of 3-deoxy-D-arabino-heptulosonate 7-phosphate (DAHP) to dehydroquinate (DHQ). This is 3-dehydroquinate synthase from Cereibacter sphaeroides (strain KD131 / KCTC 12085) (Rhodobacter sphaeroides).